Reading from the N-terminus, the 272-residue chain is NAD kinase (272 aa).

Residue aspartate 62 is the Proton acceptor of the active site. Residues 62–63, arginine 67, 129–130, arginine 140, lysine 157, aspartate 159, isoleucine 167, 170–175, alanine 194, and glutamine 229 contribute to the NAD(+) site; these read DG, NE, and SSYSSS.

The protein belongs to the NAD kinase family. It depends on a divalent metal cation as a cofactor.

Its subcellular location is the cytoplasm. The catalysed reaction is NAD(+) + ATP = ADP + NADP(+) + H(+). Involved in the regulation of the intracellular balance of NAD and NADP, and is a key enzyme in the biosynthesis of NADP. Catalyzes specifically the phosphorylation on 2'-hydroxyl of the adenosine moiety of NAD to yield NADP. The chain is NAD kinase from Thermoplasma acidophilum (strain ATCC 25905 / DSM 1728 / JCM 9062 / NBRC 15155 / AMRC-C165).